Here is a 506-residue protein sequence, read N- to C-terminus: Procardosin-B (506 aa).

A signal peptide spans 1–24 (MGTPIKASLLALFLFFLLSPTAFS). Residues 25 to 70 (VSNGGLLRVGLKKRKVDRLDQLRAHGVHMLGNARKDFGFRRTLSDS) constitute a propeptide that is removed on maturation. Positions 85 to 503 (YYGEIGIGTP…DYGKLRVGFA (419 aa)) constitute a Peptidase A1 domain. The active site involves D103. A disulfide bridge connects residues C116 and C122. 2 N-linked (GlcNAc...) asparagine glycosylation sites follow: N139 and N252. C281 and C285 are disulfide-bonded. D290 is an active-site residue. One can recognise a Saposin B-type domain in the interval 315 to 417 (VLNQQCKTLV…NEVCDQLPTS (103 aa)). 4 disulfides stabilise this stretch: C320-C411, C345-C383, C351-C380, and C425-C462. N397 carries N-linked (GlcNAc...) asparagine glycosylation.

It belongs to the peptidase A1 family. In terms of assembly, heterodimer of a light chain and a heavy chain. An intermediate form is produced first, and undergoes proteolytic processing to remove the internal plant-specific insert (PSI) and the propeptide. Detected in pistils, but not in seeds, bracts, midribs, roots, leaves or stamen extracts. Detected in seeds. In stigmas and styles, detected in the transmitting tissue and in contiguous subepidermal layers at the longitudenal grooves of the stigma (at protein level).

The protein localises to the microsome membrane. Its subcellular location is the protein storage vacuole. It localises to the secreted. It is found in the cell wall. The protein resides in the extracellular space. The protein localises to the extracellular matrix. Inhibited by the specific aspartic proteinase inhibitors diazoacetyl-noleucine methyl ester and pepstatin. Functionally, aspartic protease. Cleaves alpha-lactalbumin but not beta-lactoglobulin. The polypeptide is Procardosin-B (Cynara cardunculus (Cardoon)).